The following is a 497-amino-acid chain: Glycerol kinase (497 aa).

Threonine 12 is an ADP binding site. ATP is bound by residues threonine 12, threonine 13, and serine 14. Position 12 (threonine 12) interacts with sn-glycerol 3-phosphate. Arginine 16 is an ADP binding site. Sn-glycerol 3-phosphate contacts are provided by arginine 82, glutamate 83, tyrosine 134, and aspartate 243. The glycerol site is built by arginine 82, glutamate 83, tyrosine 134, aspartate 243, and glutamine 244. Threonine 265 and glycine 308 together coordinate ADP. ATP-binding residues include threonine 265, glycine 308, glutamine 312, and glycine 409. Positions 409 and 413 each coordinate ADP.

It belongs to the FGGY kinase family.

It catalyses the reaction glycerol + ATP = sn-glycerol 3-phosphate + ADP + H(+). It functions in the pathway polyol metabolism; glycerol degradation via glycerol kinase pathway; sn-glycerol 3-phosphate from glycerol: step 1/1. Its activity is regulated as follows. Inhibited by fructose 1,6-bisphosphate (FBP). Its function is as follows. Key enzyme in the regulation of glycerol uptake and metabolism. Catalyzes the phosphorylation of glycerol to yield sn-glycerol 3-phosphate. The chain is Glycerol kinase from Nitratidesulfovibrio vulgaris (strain DSM 19637 / Miyazaki F) (Desulfovibrio vulgaris).